Reading from the N-terminus, the 245-residue chain is Triosephosphate isomerase (245 aa).

A substrate-binding site is contributed by Asn-9–Lys-11. The active-site Electrophile is the His-92. The active-site Proton acceptor is the Glu-164. Substrate contacts are provided by residues Gly-170, Ser-209, and Gly-230–Gly-231.

The protein belongs to the triosephosphate isomerase family. Homodimer.

Its subcellular location is the cytoplasm. The enzyme catalyses D-glyceraldehyde 3-phosphate = dihydroxyacetone phosphate. The protein operates within carbohydrate biosynthesis; gluconeogenesis. It functions in the pathway carbohydrate degradation; glycolysis; D-glyceraldehyde 3-phosphate from glycerone phosphate: step 1/1. Involved in the gluconeogenesis. Catalyzes stereospecifically the conversion of dihydroxyacetone phosphate (DHAP) to D-glyceraldehyde-3-phosphate (G3P). This chain is Triosephosphate isomerase, found in Cupriavidus necator (strain ATCC 17699 / DSM 428 / KCTC 22496 / NCIMB 10442 / H16 / Stanier 337) (Ralstonia eutropha).